We begin with the raw amino-acid sequence, 210 residues long: Outer surface protein C (210 aa).

The first 18 residues, 1–18, serve as a signal peptide directing secretion; sequence MKKNTLSAILMTLFLFIS. C19 is lipidated: N-palmitoyl cysteine. C19 carries S-diacylglycerol cysteine lipidation.

The protein belongs to the OspC lipoprotein family. As to quaternary structure, homodimer. Binds human plasminogen on the bacterial surface, also binds human plasmin. Interacts with tick I.ricinus salivary protein Iric-1. Interacts with human complement C4 beta chain (C4B); whole bacteria bind to wells coated with C4b. Binding is inhibited by human complement factor C2.

The protein resides in the cell outer membrane. It is found in the cell surface. Functionally, a major immunodominant protein in mammalian hosts. Required for the initial stages of mammalian infection. Interaction with tick I.ricinus salivary protein Salp15 protects the bacteria from antibody-mediated killing in vitro and in vivo. Inhibits macrophage-mediated phagocytosis of the bacteria. Binds human plasminogen; this probably confers an extracellular protease activity on the bacteria that allows it to traverse tissue. Binds human complement C4-B, which may inhibit the complement cascade. Experiments in mice suggest it may play another role after initial infection. The polypeptide is Outer surface protein C (Borreliella burgdorferi (strain ATCC 35210 / DSM 4680 / CIP 102532 / B31) (Borrelia burgdorferi)).